A 74-amino-acid polypeptide reads, in one-letter code: MEGELAHIGAGLAAIGSGAAAIGVGNVAGNYLAGALRNPSAAASQTATLFIGIAFAEALGIFAFLVALLLMFAV.

2 helical membrane passes run Leu-5–Gly-25 and Leu-49–Leu-69.

This sequence belongs to the ATPase C chain family. As to quaternary structure, F-type ATPases have 2 components, F(1) - the catalytic core - and F(0) - the membrane proton channel. F(1) has five subunits: alpha(3), beta(3), gamma(1), delta(1), epsilon(1). F(0) has four main subunits: a(1), b(1), b'(1) and c(10-14). The alpha and beta chains form an alternating ring which encloses part of the gamma chain. F(1) is attached to F(0) by a central stalk formed by the gamma and epsilon chains, while a peripheral stalk is formed by the delta, b and b' chains.

It is found in the cell inner membrane. Its function is as follows. F(1)F(0) ATP synthase produces ATP from ADP in the presence of a proton or sodium gradient. F-type ATPases consist of two structural domains, F(1) containing the extramembraneous catalytic core and F(0) containing the membrane proton channel, linked together by a central stalk and a peripheral stalk. During catalysis, ATP synthesis in the catalytic domain of F(1) is coupled via a rotary mechanism of the central stalk subunits to proton translocation. Functionally, key component of the F(0) channel; it plays a direct role in translocation across the membrane. A homomeric c-ring of between 10-14 subunits forms the central stalk rotor element with the F(1) delta and epsilon subunits. The sequence is that of ATP synthase subunit c from Roseobacter denitrificans (strain ATCC 33942 / OCh 114) (Erythrobacter sp. (strain OCh 114)).